Consider the following 931-residue polypeptide: Transportin (931 aa).

HEAT repeat units lie at residues 10 to 37, 42 to 79, 88 to 121, 127 to 164, 171 to 201, 214 to 241, 253 to 280, 296 to 421, 430 to 459, 471 to 498, 512 to 545, 553 to 586, 594 to 632, 640 to 693, 704 to 735, 743 to 776, 784 to 819, 827 to 860, and 869 to 900; these read GLKQLVYVLNLSNSTSREVHDQIREELD, VPDYNNYLTLIFKSNELQPHIRSVAGLVLKTNIKQYFE, YIKREILPVLSDPDASVRHTVGNIITNLIKKSCF, LLPALNLALDSNSQDLIEGSLYTLSLLCEDSTKKLDSD, NQLIPKLIMFFKCNNADFRKKALVSISYFII, FLKGIFSMSEDPSEAVRTNVCKTLVTLV, KDVIQYMLHATKDKSEEVALEACEFWTA, PVLV…LSGI, VTLPLIEQRMNEQNPWPVRESAILALGAIA, SKVIPYLINTLNDPKPLVRSITCWTLSR, LHPLVVNLLNRIVDNNKKVQEAACSAFATLEEEA, LQMILVTFVNAFGKYQAKNLLILYDAISTLAKVV, ELINILVPPLLQKFNALDDSNKNLLPLLGCLNQVCSSIG, SLFF…GIGT, LPHLLLQCMNLRGSDVLQSSFALLGDMSKFCL, PDYLNILTNNLYPEYLSVCNNASWAIGEIAIRMP, VAIRDRLISNINKVNLNRGVLENTAVTIGRLGIVSP, DKFIQCWCMAIRRKTDDIEKDSAFRGMWLIINNN, and VYICDAVASWDKMQPDLYEAYFKLLHMYKTSM. Residues 32–99 form the Importin N-terminal domain; the sequence is IREELDKFHS…KREILPVLSD (68 aa). The segment at 317–401 is disordered; it reads DQGDDSMTPD…DDDDDDDGFE (85 aa). Residues 358-381 show a composition bias toward low complexity; that stretch reads DNNNNSNNNNSSNNNSSNNNNNNN. The segment covering 382-401 has biased composition (acidic residues); that stretch reads NEDDEEYNDDDDDDDDDGFE.

This sequence belongs to the importin beta family. Importin beta-2 subfamily. As to quaternary structure, forms a complex with an importin alpha subunit.

The protein resides in the cytoplasm. Its subcellular location is the nucleus envelope. Functionally, functions in nuclear protein import via a substrate-importin alpha-beta transport complex that passes though the nuclear pore complexes (NPC). Mediates docking of the substrate-importin complex to distinct nucleoporins. The sequence is that of Transportin (tnpo) from Dictyostelium discoideum (Social amoeba).